Reading from the N-terminus, the 205-residue chain is Basonuclin zinc finger protein homolog (205 aa).

2 C2H2-type zinc fingers span residues 107-130 and 135-164; these read VACD…SAVH and HTCT…PKLH. Residues 145 to 168 are disordered; that stretch reads QFSSRRSRNRHSSNNNPKLHMPES.

In terms of tissue distribution, expressed in the VA and VB motor neurons and at lower levels in the SABV neuron pair.

Its subcellular location is the nucleus. In terms of biological role, probable transcription factor. Involved in motor neuron fate determination and maintenance, acting as a transcriptional repressor to counteract gene activation by transcription factor unc-3 in a subset of motor neurons. Required throughout development to repress transcription by unc-3, probably acting by binding to specific promoter elements. Represses expression of DA and DB motor neuron-specific effector genes, such as unc-129 and unc-53, in VA and VB motor neurons. The protein is Basonuclin zinc finger protein homolog of Caenorhabditis elegans.